Reading from the N-terminus, the 236-residue chain is Pyridoxine 5'-phosphate synthase (236 aa).

Residue N6 participates in 3-amino-2-oxopropyl phosphate binding. Residue 8 to 9 coordinates 1-deoxy-D-xylulose 5-phosphate; the sequence is DH. R17 is a binding site for 3-amino-2-oxopropyl phosphate. The active-site Proton acceptor is H42. Positions 44 and 49 each coordinate 1-deoxy-D-xylulose 5-phosphate. Residue E69 is the Proton acceptor of the active site. Residue T99 coordinates 1-deoxy-D-xylulose 5-phosphate. H190 (proton donor) is an active-site residue. Residues G191 and 212–213 contribute to the 3-amino-2-oxopropyl phosphate site; that span reads GH.

Belongs to the PNP synthase family. Homooctamer; tetramer of dimers.

Its subcellular location is the cytoplasm. It catalyses the reaction 3-amino-2-oxopropyl phosphate + 1-deoxy-D-xylulose 5-phosphate = pyridoxine 5'-phosphate + phosphate + 2 H2O + H(+). The protein operates within cofactor biosynthesis; pyridoxine 5'-phosphate biosynthesis; pyridoxine 5'-phosphate from D-erythrose 4-phosphate: step 5/5. Functionally, catalyzes the complicated ring closure reaction between the two acyclic compounds 1-deoxy-D-xylulose-5-phosphate (DXP) and 3-amino-2-oxopropyl phosphate (1-amino-acetone-3-phosphate or AAP) to form pyridoxine 5'-phosphate (PNP) and inorganic phosphate. This is Pyridoxine 5'-phosphate synthase from Pelodictyon phaeoclathratiforme (strain DSM 5477 / BU-1).